The sequence spans 399 residues: Phosphoglycerate kinase (399 aa).

Residues 22 to 24, arginine 38, 61 to 64, arginine 120, and arginine 153 each bind substrate; these read DFN and HLGR. ATP is bound by residues lysine 204, glutamate 326, and 353–356; that span reads GGDT.

It belongs to the phosphoglycerate kinase family. Monomer.

The protein localises to the cytoplasm. It carries out the reaction (2R)-3-phosphoglycerate + ATP = (2R)-3-phospho-glyceroyl phosphate + ADP. Its pathway is carbohydrate degradation; glycolysis; pyruvate from D-glyceraldehyde 3-phosphate: step 2/5. In Geotalea daltonii (strain DSM 22248 / JCM 15807 / FRC-32) (Geobacter daltonii), this protein is Phosphoglycerate kinase.